The sequence spans 448 residues: Phosphoglucosamine mutase (448 aa).

Ser100 (phosphoserine intermediate) is an active-site residue. Mg(2+) is bound by residues Ser100, Asp240, Asp242, and Asp244. The residue at position 100 (Ser100) is a Phosphoserine.

The protein belongs to the phosphohexose mutase family. It depends on Mg(2+) as a cofactor. Post-translationally, activated by phosphorylation.

The catalysed reaction is alpha-D-glucosamine 1-phosphate = D-glucosamine 6-phosphate. Catalyzes the conversion of glucosamine-6-phosphate to glucosamine-1-phosphate. This Clostridioides difficile (strain 630) (Peptoclostridium difficile) protein is Phosphoglucosamine mutase.